The chain runs to 216 residues: Cytochrome c biogenesis ATP-binding export protein CcmA (216 aa).

The region spanning 2–215 (LSVEELSCVR…SNHLRKIKLG (214 aa)) is the ABC transporter domain. 34–41 (GHNGAGKT) provides a ligand contact to ATP.

Belongs to the ABC transporter superfamily. CcmA exporter (TC 3.A.1.107) family. As to quaternary structure, the complex is composed of two ATP-binding proteins (CcmA) and two transmembrane proteins (CcmB).

It localises to the cell inner membrane. The catalysed reaction is heme b(in) + ATP + H2O = heme b(out) + ADP + phosphate + H(+). Its function is as follows. Part of the ABC transporter complex CcmAB involved in the biogenesis of c-type cytochromes; once thought to export heme, this seems not to be the case, but its exact role is uncertain. Responsible for energy coupling to the transport system. The sequence is that of Cytochrome c biogenesis ATP-binding export protein CcmA from Photobacterium profundum (strain SS9).